The following is a 278-amino-acid chain: Undecaprenyl-diphosphatase (278 aa).

Transmembrane regions (helical) follow at residues 2–22 (ALVE…TEWL), 44–64 (AFME…VVLL), 85–105 (IEMW…GLLW), 113–133 (FYNY…FIVI), 150–170 (ITYT…IFPG), 189–209 (TVAA…ASAL), 223–243 (LMIL…SIKF), and 253–273 (FKIF…YFSA).

This sequence belongs to the UppP family.

Its subcellular location is the cell membrane. It catalyses the reaction di-trans,octa-cis-undecaprenyl diphosphate + H2O = di-trans,octa-cis-undecaprenyl phosphate + phosphate + H(+). Functionally, catalyzes the dephosphorylation of undecaprenyl diphosphate (UPP). Confers resistance to bacitracin. The protein is Undecaprenyl-diphosphatase of Desulfitobacterium hafniense (strain DSM 10664 / DCB-2).